The primary structure comprises 164 residues: Leucine-rich single-pass membrane protein 2 (164 aa).

A helical transmembrane segment spans residues 97–117; sequence GFLLLLALLVLTCLVLALLAV.

It is found in the membrane. The chain is Leucine-rich single-pass membrane protein 2 (LSMEM2) from Homo sapiens (Human).